Here is a 260-residue protein sequence, read N- to C-terminus: 3'-5' ssDNA/RNA exonuclease TatD (260 aa).

The a divalent metal cation site is built by Glu-91, His-127, and His-152.

Belongs to the metallo-dependent hydrolases superfamily. TatD-type hydrolase family. TatD subfamily. Monomer. Requires Mg(2+) as cofactor.

Its subcellular location is the cytoplasm. 3'-5' exonuclease that prefers single-stranded DNA and RNA. May play a role in the H(2)O(2)-induced DNA damage repair. This chain is 3'-5' ssDNA/RNA exonuclease TatD, found in Enterobacter sp. (strain 638).